The chain runs to 152 residues: Acidic phospholipase A2 57 (152 aa).

The first 21 residues, 1–21 (MYPAHLLGLLAVCVSLLGAAS), serve as a signal peptide directing secretion. Residues 22–27 (IPPLPL) constitute a propeptide that is removed on maturation. Disulfide bonds link Cys38-Cys104, Cys54-Cys151, Cys56-Cys72, Cys71-Cys132, Cys78-Cys125, Cys88-Cys118, and Cys111-Cys123. Positions 55, 57, and 59 each coordinate Ca(2+). Residue His75 is part of the active site. Asp76 is a binding site for Ca(2+). Asp126 is an active-site residue.

The protein belongs to the phospholipase A2 family. Group I subfamily. D49 sub-subfamily. The cofactor is Ca(2+). Expressed by the venom gland.

Its subcellular location is the secreted. The enzyme catalyses a 1,2-diacyl-sn-glycero-3-phosphocholine + H2O = a 1-acyl-sn-glycero-3-phosphocholine + a fatty acid + H(+). PLA2 catalyzes the calcium-dependent hydrolysis of the 2-acyl groups in 3-sn-phosphoglycerides. This chain is Acidic phospholipase A2 57, found in Hydrophis hardwickii (Hardwick's spine-bellied seasnake).